The primary structure comprises 134 residues: Small ribosomal subunit protein uS8c (134 aa).

This sequence belongs to the universal ribosomal protein uS8 family. As to quaternary structure, part of the 30S ribosomal subunit.

Its subcellular location is the plastid. The protein localises to the chloroplast. Its function is as follows. One of the primary rRNA binding proteins, it binds directly to 16S rRNA central domain where it helps coordinate assembly of the platform of the 30S subunit. The chain is Small ribosomal subunit protein uS8c (rps8) from Lotus japonicus (Lotus corniculatus var. japonicus).